The following is a 542-amino-acid chain: MKPIKEIADQLGLKDDVLYPYGHYIAKIDHRFLKSLENREDGKLILVTAVTPTPAGEGKTTTSIGLSMSLNRIGKKSIVTLREPSLGPTLGLKGGATGGGRSRVLPSDEINLHFTGDMHAVASAHNLLAAVLDSHIKHGNELKIDITRVFWKRTMDMNDRALRSIVIGLGGSANGFPREDSFIITAASEVMAVLALSENMKDLKERLGKIIVALNTDRKIVRVSDLGIQGAMAVLLKDAINPNLVQTTEGTPALIHCGPFANIAHGTNSIIATKMAMKLSEYTVTEAGFGADLGAEKFIDFVSRVGGFYPNAAVLVATVRALKYHGGADLKNIHEENLEALKEGFKNLRVHLENLRKFNLPVVVALNRFITDTEKEIAYVVKECEKLGVRVAVSEVFEKGSEGGVELAKAVTEAVKDVKPVYLYEMNDPVEKKIEILAKEIYRAGRVEFSDTAKNALKFIKKHGFDELPVIVAKTPKSISHDPSLRGAPEGYTFVVSDLFVSAGAGFVVALSGDINLMPGLPERPNALNMDVDDSGNIVGVS.

53–60 (TPAGEGKT) provides a ligand contact to ATP.

The protein belongs to the formate--tetrahydrofolate ligase family.

The catalysed reaction is (6S)-5,6,7,8-tetrahydrofolate + formate + ATP = (6R)-10-formyltetrahydrofolate + ADP + phosphate. Its pathway is one-carbon metabolism; tetrahydrofolate interconversion. The chain is Formate--tetrahydrofolate ligase from Thermotoga petrophila (strain ATCC BAA-488 / DSM 13995 / JCM 10881 / RKU-1).